Here is a 180-residue protein sequence, read N- to C-terminus: Crossover junction endodeoxyribonuclease RuvC (180 aa).

Residues aspartate 7, glutamate 66, and aspartate 138 contribute to the active site. Mg(2+)-binding residues include aspartate 7, glutamate 66, and aspartate 138.

It belongs to the RuvC family. Homodimer which binds Holliday junction (HJ) DNA. The HJ becomes 2-fold symmetrical on binding to RuvC with unstacked arms; it has a different conformation from HJ DNA in complex with RuvA. In the full resolvosome a probable DNA-RuvA(4)-RuvB(12)-RuvC(2) complex forms which resolves the HJ. Mg(2+) is required as a cofactor.

The protein resides in the cytoplasm. It catalyses the reaction Endonucleolytic cleavage at a junction such as a reciprocal single-stranded crossover between two homologous DNA duplexes (Holliday junction).. Its function is as follows. The RuvA-RuvB-RuvC complex processes Holliday junction (HJ) DNA during genetic recombination and DNA repair. Endonuclease that resolves HJ intermediates. Cleaves cruciform DNA by making single-stranded nicks across the HJ at symmetrical positions within the homologous arms, yielding a 5'-phosphate and a 3'-hydroxyl group; requires a central core of homology in the junction. The consensus cleavage sequence is 5'-(A/T)TT(C/G)-3'. Cleavage occurs on the 3'-side of the TT dinucleotide at the point of strand exchange. HJ branch migration catalyzed by RuvA-RuvB allows RuvC to scan DNA until it finds its consensus sequence, where it cleaves and resolves the cruciform DNA. This is Crossover junction endodeoxyribonuclease RuvC from Paraburkholderia phytofirmans (strain DSM 17436 / LMG 22146 / PsJN) (Burkholderia phytofirmans).